A 429-amino-acid chain; its full sequence is Bifunctional protein GlmU (429 aa).

Residues 1–223 are pyrophosphorylase; it reads MKTSILILAA…EDEFMGINDK (223 aa). UDP-N-acetyl-alpha-D-glucosamine is bound by residues 8 to 11, K22, and 81 to 82; these read LAAG and GT. D102 serves as a coordination point for Mg(2+). UDP-N-acetyl-alpha-D-glucosamine is bound by residues G135, E149, N164, and N221. N221 is a Mg(2+) binding site. Residues 224–244 are linker; it reads FELSIAENFMQEKIKKYWMQQ. The N-acetyltransferase stretch occupies residues 245 to 429; that stretch reads GVIFHLPQST…KDYYYKKFQK (185 aa). UDP-N-acetyl-alpha-D-glucosamine-binding residues include R308 and K325. H336 functions as the Proton acceptor in the catalytic mechanism. UDP-N-acetyl-alpha-D-glucosamine-binding residues include Y339 and N350. Acetyl-CoA-binding positions include 359–360, S378, A396, and R413; that span reads NY.

In the N-terminal section; belongs to the N-acetylglucosamine-1-phosphate uridyltransferase family. The protein in the C-terminal section; belongs to the transferase hexapeptide repeat family. As to quaternary structure, homotrimer. Mg(2+) is required as a cofactor.

Its subcellular location is the cytoplasm. It catalyses the reaction alpha-D-glucosamine 1-phosphate + acetyl-CoA = N-acetyl-alpha-D-glucosamine 1-phosphate + CoA + H(+). The catalysed reaction is N-acetyl-alpha-D-glucosamine 1-phosphate + UTP + H(+) = UDP-N-acetyl-alpha-D-glucosamine + diphosphate. Its pathway is nucleotide-sugar biosynthesis; UDP-N-acetyl-alpha-D-glucosamine biosynthesis; N-acetyl-alpha-D-glucosamine 1-phosphate from alpha-D-glucosamine 6-phosphate (route II): step 2/2. It participates in nucleotide-sugar biosynthesis; UDP-N-acetyl-alpha-D-glucosamine biosynthesis; UDP-N-acetyl-alpha-D-glucosamine from N-acetyl-alpha-D-glucosamine 1-phosphate: step 1/1. The protein operates within bacterial outer membrane biogenesis; LPS lipid A biosynthesis. In terms of biological role, catalyzes the last two sequential reactions in the de novo biosynthetic pathway for UDP-N-acetylglucosamine (UDP-GlcNAc). The C-terminal domain catalyzes the transfer of acetyl group from acetyl coenzyme A to glucosamine-1-phosphate (GlcN-1-P) to produce N-acetylglucosamine-1-phosphate (GlcNAc-1-P), which is converted into UDP-GlcNAc by the transfer of uridine 5-monophosphate (from uridine 5-triphosphate), a reaction catalyzed by the N-terminal domain. This is Bifunctional protein GlmU from Campylobacter jejuni subsp. jejuni serotype O:6 (strain 81116 / NCTC 11828).